A 190-amino-acid chain; its full sequence is uncharacterized protein (190 aa).

The Cytoplasmic segment spans residues 1–55 (MSRLRRFNRKILSLSSDYTHDGESDQEDVSILPLDTEEQEELIQKFETNAHITNK). A helical membrane pass occupies residues 56 to 76 (LYINLLSILYLLYGGLLMILV). Topologically, residues 77–80 (RKSR) are extracellular. Residues 81-101 (GYIKLALLAGANSLICSCITL) traverse the membrane as a helical segment. Residues 102–123 (RYDIVNDYLLFKKFKLRVSNFS) are Cytoplasmic-facing. Residues 124–144 (INIINIILLVLMAWISFNHVV) form a helical membrane-spanning segment. At 145 to 149 (EDKKT) the chain is on the extracellular side. The helical transmembrane segment at 150–170 (VLCLQVPMFLFWVAVLVKRWA) threads the bilayer. At 171 to 190 (RNIEDEIADLRCLKYKYKNA) the chain is on the cytoplasmic side.

Its subcellular location is the membrane. This is an uncharacterized protein from Saccharomyces cerevisiae (strain ATCC 204508 / S288c) (Baker's yeast).